The sequence spans 260 residues: RxLR effector protein BLR38 (260 aa).

Positions 1–18 are cleaved as a signal peptide; sequence MHCTVFFLLIACAKSSYG. A RxLR motif is present at residues 46–49; it reads RLLR. The short motif at 136–148 is the Nuclear localuization signal (NLS) element; that stretch reads MPSSRKRPRALDE.

This sequence belongs to the RxLR effector family.

The protein localises to the secreted. It is found in the host nucleus. Functionally, secreted effector that triggers a robust hypersensitive response (HR) in Lactuca serriola LS102. The response to BLN06 was visible as strong necrosis. Although effector recognition is frequently associated with single dominant R gene loci, the recognition of BLR38 requires 2 unlinked loci that display incomplete dominance. The sequence is that of RxLR effector protein BLR38 from Bremia lactucae (Lettuce downy mildew).